Here is a 415-residue protein sequence, read N- to C-terminus: Branched-chain-amino-acid aminotransferase, cytosolic (415 aa).

The residue at position 244 (lysine 244) is an N6-(pyridoxal phosphate)lysine.

It belongs to the class-IV pyridoxal-phosphate-dependent aminotransferase family. Requires pyridoxal 5'-phosphate as cofactor.

The protein localises to the cytoplasm. The enzyme catalyses L-leucine + 2-oxoglutarate = 4-methyl-2-oxopentanoate + L-glutamate. The catalysed reaction is L-isoleucine + 2-oxoglutarate = (S)-3-methyl-2-oxopentanoate + L-glutamate. It catalyses the reaction L-valine + 2-oxoglutarate = 3-methyl-2-oxobutanoate + L-glutamate. Its function is as follows. Catalyzes the first reaction in the catabolism of the essential branched chain amino acids leucine, isoleucine, and valine. The protein is Branched-chain-amino-acid aminotransferase, cytosolic (bcat-1) of Caenorhabditis elegans.